The sequence spans 118 residues: NADH-quinone oxidoreductase subunit A (118 aa).

3 consecutive transmembrane segments (helical) span residues 5 to 25, 62 to 82, and 87 to 107; these read YAFI…PLVL, LYAL…PWAV, and LGLF…IGLV.

Belongs to the complex I subunit 3 family. In terms of assembly, NDH-1 is composed of 14 different subunits. Subunits NuoA, H, J, K, L, M, N constitute the membrane sector of the complex.

The protein resides in the cell membrane. It catalyses the reaction a quinone + NADH + 5 H(+)(in) = a quinol + NAD(+) + 4 H(+)(out). Its function is as follows. NDH-1 shuttles electrons from NADH, via FMN and iron-sulfur (Fe-S) centers, to quinones in the respiratory chain. The immediate electron acceptor for the enzyme in this species is believed to be ubiquinone. Couples the redox reaction to proton translocation (for every two electrons transferred, four hydrogen ions are translocated across the cytoplasmic membrane), and thus conserves the redox energy in a proton gradient. The protein is NADH-quinone oxidoreductase subunit A of Herpetosiphon aurantiacus (strain ATCC 23779 / DSM 785 / 114-95).